A 163-amino-acid polypeptide reads, in one-letter code: Flagellar assembly factor FliW (163 aa).

The segment covering 136 to 156 (PFFETSEKKQSGLQRLERQPE) has biased composition (basic and acidic residues). The interval 136-163 (PFFETSEKKQSGLQRLERQPEKSVPPAG) is disordered.

This sequence belongs to the FliW family. Interacts with translational regulator CsrA and flagellin(s).

It localises to the cytoplasm. Its function is as follows. Acts as an anti-CsrA protein, binds CsrA and prevents it from repressing translation of its target genes, one of which is flagellin. Binds to flagellin and participates in the assembly of the flagellum. In Geotalea uraniireducens (strain Rf4) (Geobacter uraniireducens), this protein is Flagellar assembly factor FliW.